We begin with the raw amino-acid sequence, 298 residues long: UDP-3-O-acyl-N-acetylglucosamine deacetylase (298 aa).

Zn(2+) is bound by residues His75, His232, and Asp236. The Proton donor role is filled by His259.

It belongs to the LpxC family. Requires Zn(2+) as cofactor.

The enzyme catalyses a UDP-3-O-[(3R)-3-hydroxyacyl]-N-acetyl-alpha-D-glucosamine + H2O = a UDP-3-O-[(3R)-3-hydroxyacyl]-alpha-D-glucosamine + acetate. It functions in the pathway glycolipid biosynthesis; lipid IV(A) biosynthesis; lipid IV(A) from (3R)-3-hydroxytetradecanoyl-[acyl-carrier-protein] and UDP-N-acetyl-alpha-D-glucosamine: step 2/6. In terms of biological role, catalyzes the hydrolysis of UDP-3-O-myristoyl-N-acetylglucosamine to form UDP-3-O-myristoylglucosamine and acetate, the committed step in lipid A biosynthesis. In Wolinella succinogenes (strain ATCC 29543 / DSM 1740 / CCUG 13145 / JCM 31913 / LMG 7466 / NCTC 11488 / FDC 602W) (Vibrio succinogenes), this protein is UDP-3-O-acyl-N-acetylglucosamine deacetylase.